The primary structure comprises 115 residues: Large ribosomal subunit protein bL19 (115 aa).

The protein belongs to the bacterial ribosomal protein bL19 family.

In terms of biological role, this protein is located at the 30S-50S ribosomal subunit interface and may play a role in the structure and function of the aminoacyl-tRNA binding site. This chain is Large ribosomal subunit protein bL19, found in Francisella tularensis subsp. mediasiatica (strain FSC147).